The following is a 461-amino-acid chain: Argininosuccinate lyase (461 aa).

The protein belongs to the lyase 1 family. Argininosuccinate lyase subfamily.

The protein resides in the cytoplasm. The catalysed reaction is 2-(N(omega)-L-arginino)succinate = fumarate + L-arginine. Its pathway is amino-acid biosynthesis; L-arginine biosynthesis; L-arginine from L-ornithine and carbamoyl phosphate: step 3/3. The sequence is that of Argininosuccinate lyase from Chloroflexus aurantiacus (strain ATCC 29366 / DSM 635 / J-10-fl).